The chain runs to 946 residues: Translation initiation factor IF-2 (946 aa).

Disordered stretches follow at residues 58–250 (AERK…AVVI) and 301–324 (VSRD…KSLS). Low complexity-rich tracts occupy residues 102 to 165 (EPPQ…QPAA) and 174 to 185 (AQPSAPQPAAAQ). Residues 186-211 (PRPPQPPMPSRPPPAGYRPAPPPGAR) are compositionally biased toward pro residues. Residues 212-229 (PPMSAAPGAPAQPGAAAQ) are compositionally biased toward low complexity. Positions 445–614 (IRPPVVTVMG…ALQSEVLELK (170 aa)) constitute a tr-type G domain. A G1 region spans residues 454-461 (GHVDHGKT). 454–461 (GHVDHGKT) contacts GTP. Residues 479–483 (GITQH) are G2. Residues 500 to 503 (DTPG) are G3. GTP-binding positions include 500-504 (DTPGH) and 554-557 (NKVD). Residues 554-557 (NKVD) form a G4 region. The segment at 590-592 (SAR) is G5.

This sequence belongs to the TRAFAC class translation factor GTPase superfamily. Classic translation factor GTPase family. IF-2 subfamily.

It localises to the cytoplasm. Functionally, one of the essential components for the initiation of protein synthesis. Protects formylmethionyl-tRNA from spontaneous hydrolysis and promotes its binding to the 30S ribosomal subunits. Also involved in the hydrolysis of GTP during the formation of the 70S ribosomal complex. This Anaeromyxobacter sp. (strain K) protein is Translation initiation factor IF-2.